A 461-amino-acid chain; its full sequence is L-seryl-tRNA(Sec) selenium transferase (461 aa).

Residue Lys-294 is modified to N6-(pyridoxal phosphate)lysine.

It belongs to the SelA family. The cofactor is pyridoxal 5'-phosphate.

The protein localises to the cytoplasm. It carries out the reaction L-seryl-tRNA(Sec) + selenophosphate + H(+) = L-selenocysteinyl-tRNA(Sec) + phosphate. It participates in aminoacyl-tRNA biosynthesis; selenocysteinyl-tRNA(Sec) biosynthesis; selenocysteinyl-tRNA(Sec) from L-seryl-tRNA(Sec) (bacterial route): step 1/1. Its function is as follows. Converts seryl-tRNA(Sec) to selenocysteinyl-tRNA(Sec) required for selenoprotein biosynthesis. This is L-seryl-tRNA(Sec) selenium transferase from Haemophilus influenzae (strain 86-028NP).